The sequence spans 67 residues: Large ribosomal subunit protein bL35 (67 aa).

It belongs to the bacterial ribosomal protein bL35 family.

The protein is Large ribosomal subunit protein bL35 of Paramagnetospirillum magneticum (strain ATCC 700264 / AMB-1) (Magnetospirillum magneticum).